The sequence spans 127 residues: Large ribosomal subunit protein bL12 (127 aa).

This sequence belongs to the bacterial ribosomal protein bL12 family. As to quaternary structure, homodimer. Part of the ribosomal stalk of the 50S ribosomal subunit. Forms a multimeric L10(L12)X complex, where L10 forms an elongated spine to which 2 to 4 L12 dimers bind in a sequential fashion. Binds GTP-bound translation factors.

Its function is as follows. Forms part of the ribosomal stalk which helps the ribosome interact with GTP-bound translation factors. Is thus essential for accurate translation. This is Large ribosomal subunit protein bL12 from Syntrophobacter fumaroxidans (strain DSM 10017 / MPOB).